The primary structure comprises 664 residues: DNA mismatch repair protein MutL (664 aa).

Residues 382 to 447 (RKAGQEQQLQ…YGEPAPSKQQ (66 aa)) are disordered. Polar residues predominate over residues 427–436 (RHTTSSNQSE).

This sequence belongs to the DNA mismatch repair MutL/HexB family.

Its function is as follows. This protein is involved in the repair of mismatches in DNA. It is required for dam-dependent methyl-directed DNA mismatch repair. May act as a 'molecular matchmaker', a protein that promotes the formation of a stable complex between two or more DNA-binding proteins in an ATP-dependent manner without itself being part of a final effector complex. The polypeptide is DNA mismatch repair protein MutL (Vibrio vulnificus (strain YJ016)).